The following is a 206-amino-acid chain: 3-isopropylmalate dehydratase small subunit (206 aa).

The protein belongs to the LeuD family. LeuD type 1 subfamily. As to quaternary structure, heterodimer of LeuC and LeuD.

The catalysed reaction is (2R,3S)-3-isopropylmalate = (2S)-2-isopropylmalate. The protein operates within amino-acid biosynthesis; L-leucine biosynthesis; L-leucine from 3-methyl-2-oxobutanoate: step 2/4. Catalyzes the isomerization between 2-isopropylmalate and 3-isopropylmalate, via the formation of 2-isopropylmaleate. This chain is 3-isopropylmalate dehydratase small subunit, found in Leptospira interrogans serogroup Icterohaemorrhagiae serovar copenhageni (strain Fiocruz L1-130).